The sequence spans 362 residues: Cobalt-precorrin-5B C(1)-methyltransferase (362 aa).

Belongs to the CbiD family.

It catalyses the reaction Co-precorrin-5B + S-adenosyl-L-methionine = Co-precorrin-6A + S-adenosyl-L-homocysteine. The protein operates within cofactor biosynthesis; adenosylcobalamin biosynthesis; cob(II)yrinate a,c-diamide from sirohydrochlorin (anaerobic route): step 6/10. Catalyzes the methylation of C-1 in cobalt-precorrin-5B to form cobalt-precorrin-6A. The protein is Cobalt-precorrin-5B C(1)-methyltransferase of Geobacter sulfurreducens (strain ATCC 51573 / DSM 12127 / PCA).